The following is a 235-amino-acid chain: Glycerol-3-phosphate acyltransferase (235 aa).

The next 6 helical transmembrane spans lie at 4-24, 56-76, 94-114, 126-146, 152-172, and 194-214; these read LLAI…IMAG, TVTL…VAFF, LLAG…GFKG, IGIA…TVWF, VASI…KYVF, and SLDY…LFTH.

The protein belongs to the PlsY family. Probably interacts with PlsX.

Its subcellular location is the cell inner membrane. It carries out the reaction an acyl phosphate + sn-glycerol 3-phosphate = a 1-acyl-sn-glycero-3-phosphate + phosphate. It functions in the pathway lipid metabolism; phospholipid metabolism. Functionally, catalyzes the transfer of an acyl group from acyl-phosphate (acyl-PO(4)) to glycerol-3-phosphate (G3P) to form lysophosphatidic acid (LPA). This enzyme utilizes acyl-phosphate as fatty acyl donor, but not acyl-CoA or acyl-ACP. The chain is Glycerol-3-phosphate acyltransferase from Chlorobium phaeovibrioides (strain DSM 265 / 1930) (Prosthecochloris vibrioformis (strain DSM 265)).